The chain runs to 440 residues: tRNA-2-methylthio-N(6)-dimethylallyladenosine synthase (440 aa).

Residues 4–120 (NYVYIETFGC…LNDMVLAAER (117 aa)) form the MTTase N-terminal domain. The [4Fe-4S] cluster site is built by Cys-13, Cys-49, Cys-83, Cys-158, Cys-162, and Cys-165. Positions 144-374 (GTARISSFVT…QALQKRTTME (231 aa)) constitute a Radical SAM core domain. Residues 377–439 (DVLLGTRQTV…QNSLLGELLP (63 aa)) form the TRAM domain.

Belongs to the methylthiotransferase family. MiaB subfamily. As to quaternary structure, monomer. It depends on [4Fe-4S] cluster as a cofactor.

The protein resides in the cytoplasm. It carries out the reaction N(6)-dimethylallyladenosine(37) in tRNA + (sulfur carrier)-SH + AH2 + 2 S-adenosyl-L-methionine = 2-methylsulfanyl-N(6)-dimethylallyladenosine(37) in tRNA + (sulfur carrier)-H + 5'-deoxyadenosine + L-methionine + A + S-adenosyl-L-homocysteine + 2 H(+). Functionally, catalyzes the methylthiolation of N6-(dimethylallyl)adenosine (i(6)A), leading to the formation of 2-methylthio-N6-(dimethylallyl)adenosine (ms(2)i(6)A) at position 37 in tRNAs that read codons beginning with uridine. This is tRNA-2-methylthio-N(6)-dimethylallyladenosine synthase from Pelobacter propionicus (strain DSM 2379 / NBRC 103807 / OttBd1).